A 456-amino-acid polypeptide reads, in one-letter code: CBL-interacting serine/threonine-protein kinase 2 (456 aa).

Residues 12 to 266 (YEVGRLLGQG…IAKIKESSWF (255 aa)) form the Protein kinase domain. ATP contacts are provided by residues 18 to 26 (LGQGTFAKV) and lysine 41. The active-site Proton acceptor is aspartate 134. An activation loop region spans residues 152–181 (DFGLSALADCKRQDGLLHTTCGTPAYVAPE). Serine 156 is subject to Phosphoserine. Threonine 170 is modified (phosphothreonine). Positions 280–309 (MEKQQVREATNPMEAGGSGQNENGENHEPP) are disordered. Residues 309 to 333 (PRLATLNAFDIIALSTGFGLAGLFG) form the NAF domain. A PPI region spans residues 338–367 (KRESRFASQKPASEIISKLVEVAKCLKLKI).

It belongs to the protein kinase superfamily. CAMK Ser/Thr protein kinase family. SNF1 subfamily. As to quaternary structure, interacts with CBL2, CBL3 and CBL5. Mn(2+) serves as cofactor.

It catalyses the reaction L-seryl-[protein] + ATP = O-phospho-L-seryl-[protein] + ADP + H(+). The enzyme catalyses L-threonyl-[protein] + ATP = O-phospho-L-threonyl-[protein] + ADP + H(+). CIPK serine-threonine protein kinases interact with CBL proteins. Binding of a CBL protein to the regulatory NAF domain of CIPK protein lead to the activation of the kinase in a calcium-dependent manner. The sequence is that of CBL-interacting serine/threonine-protein kinase 2 (CIPK2) from Arabidopsis thaliana (Mouse-ear cress).